The primary structure comprises 152 residues: 3-dehydroquinate dehydratase (152 aa).

Y23 functions as the Proton acceptor in the catalytic mechanism. Positions 75, 81, and 88 each coordinate substrate. The Proton donor role is filled by H101. Residues 102–103 (IS) and R112 each bind substrate.

It belongs to the type-II 3-dehydroquinase family. As to quaternary structure, homododecamer.

It catalyses the reaction 3-dehydroquinate = 3-dehydroshikimate + H2O. The protein operates within metabolic intermediate biosynthesis; chorismate biosynthesis; chorismate from D-erythrose 4-phosphate and phosphoenolpyruvate: step 3/7. Functionally, catalyzes a trans-dehydration via an enolate intermediate. This Alkalilimnicola ehrlichii (strain ATCC BAA-1101 / DSM 17681 / MLHE-1) protein is 3-dehydroquinate dehydratase.